Consider the following 174-residue polypeptide: uncharacterized protein (174 aa).

Transmembrane regions (helical) follow at residues 29–51 and 66–83; these read FAVE…GFWY and VIVI…VTKI.

It localises to the cell membrane. This is an uncharacterized protein from Bacillus subtilis (strain 168).